The chain runs to 373 residues: Carboxylesterase/phospholipase LipF (373 aa).

The short motif at 116–118 (HGG) is the Involved in the stabilization of the negatively charged intermediate by the formation of the oxyanion hole element. Residues Ser-186, Glu-285, and His-315 contribute to the active site.

It belongs to the 'GDXG' lipolytic enzyme family.

It catalyses the reaction a carboxylic ester + H2O = an alcohol + a carboxylate + H(+). The enzyme catalyses a 1,2-diacyl-sn-glycero-3-phosphocholine + H2O = phosphocholine + a 1,2-diacyl-sn-glycerol + H(+). In terms of biological role, a short-chain esterase and phospholipase. The protein is Carboxylesterase/phospholipase LipF of Mycobacterium tuberculosis (strain CDC 1551 / Oshkosh).